The sequence spans 738 residues: Interleukin-12 receptor subunit beta-1 (738 aa).

A signal peptide spans 1-19; that stretch reads MDMMGLAGTSKHITFLLLC. The Extracellular segment spans residues 20 to 565; the sequence is QLGASGPGDG…QRFSFEVQIS (546 aa). Fibronectin type-III domains lie at 47-152, 152-258, 259-359, 360-465, and 469-565; these read GPRN…TPPL, LGHI…PEVL, PQAK…LPAQ, ELTE…GNAS, and TPRH…VQIS. A glycan (N-linked (GlcNAc...) asparagine) is linked at Asn50. Cysteines 53 and 63 form a disulfide. 6 N-linked (GlcNAc...) asparagine glycosylation sites follow: Asn73, Asn86, Asn130, Asn144, Asn169, and Asn188. Residues 244–248 carry the WSXWS motif motif; that stretch reads WSDWS. 6 N-linked (GlcNAc...) asparagine glycosylation sites follow: Asn330, Asn368, Asn374, Asn401, Asn463, and Asn477. A helical membrane pass occupies residues 566–591; that stretch reads RLSIIFASLGSFASVLLVGSLGYIGL. Residues 592–738 are Cytoplasmic-facing; sequence NRAAWHLCPP…PGPPTLGQEA (147 aa). The short motif at 598–606 is the Box 1 motif element; that stretch reads LCPPLPTPC.

It belongs to the type I cytokine receptor family. Type 2 subfamily. Dimer or oligomer; disulfide-linked. Interacts with IL12RB2 to form the high affinity IL12 receptor. Heterodimer with IL23R; in presence of IL23. The heterodimer forms the IL23 receptor.

The protein resides in the membrane. Functions as an interleukin receptor which binds interleukin-12 with low affinity and is involved in IL12 transduction. Associated with IL12RB2 it forms a functional, high affinity receptor for IL12. Also associates with IL23R to form the interleukin-23 receptor which functions in IL23 signal transduction probably through activation of the Jak-Stat signaling cascade. The sequence is that of Interleukin-12 receptor subunit beta-1 (Il12rb1) from Mus musculus (Mouse).